Consider the following 207-residue polypeptide: Ribosome maturation factor RimM (207 aa).

The PRC barrel domain maps to 114–207; the sequence is DDEYYWVDLI…RIDSDWPLDY (94 aa).

The protein belongs to the RimM family. In terms of assembly, binds ribosomal protein uS19.

It localises to the cytoplasm. An accessory protein needed during the final step in the assembly of 30S ribosomal subunit, possibly for assembly of the head region. Essential for efficient processing of 16S rRNA. May be needed both before and after RbfA during the maturation of 16S rRNA. It has affinity for free ribosomal 30S subunits but not for 70S ribosomes. This Bordetella pertussis (strain Tohama I / ATCC BAA-589 / NCTC 13251) protein is Ribosome maturation factor RimM.